A 429-amino-acid chain; its full sequence is Glutamate-1-semialdehyde 2,1-aminomutase 2 (429 aa).

At lysine 268 the chain carries N6-(pyridoxal phosphate)lysine.

Belongs to the class-III pyridoxal-phosphate-dependent aminotransferase family. HemL subfamily. In terms of assembly, homodimer. Requires pyridoxal 5'-phosphate as cofactor.

The protein resides in the cytoplasm. The enzyme catalyses (S)-4-amino-5-oxopentanoate = 5-aminolevulinate. Its pathway is porphyrin-containing compound metabolism; protoporphyrin-IX biosynthesis; 5-aminolevulinate from L-glutamyl-tRNA(Glu): step 2/2. This is Glutamate-1-semialdehyde 2,1-aminomutase 2 from Geobacillus kaustophilus (strain HTA426).